The following is a 269-amino-acid chain: BAG family molecular chaperone regulator 4 (269 aa).

The segment at 1-40 (MMHNSTEESEWEVRPGGMLVQRRDDAASSDHKPLQDPDSA) is disordered. Over residues 21–35 (QRRDDAASSDHKPLQ) the composition is skewed to basic and acidic residues. Residues 46–122 (QTIRITVSHG…LVVVVEDTNK (77 aa)) form the Ubiquitin-like domain. In terms of domain architecture, BAG spans 138–219 (AIAAVNAVTG…NLQEAVDKLK (82 aa)). Positions 241–269 (SFGNGVGSLNPPPPASPSANVTQDWEKFD) are disordered.

Binds to the ATPase domain of HSP70/HSC70 chaperones. Interacts with HSP70-1. In terms of tissue distribution, detected in stems, leaves, flowers and roots.

Co-chaperone that regulates diverse cellular pathways, such as programmed cell death and stress responses. The chain is BAG family molecular chaperone regulator 4 (BAG4) from Arabidopsis thaliana (Mouse-ear cress).